A 91-amino-acid chain; its full sequence is Sec-independent protein translocase protein TatA (91 aa).

Residues 1 to 21 traverse the membrane as a helical segment; sequence MGSMSVWHWVIVAVVVMLLFG. The tract at residues 42–91 is disordered; sequence GMADDETQPTNTTSVPPVGPNDPVRTLPHQGAPGTAPQQTHVPAGDHKAV.

This sequence belongs to the TatA/E family. The Tat system comprises two distinct complexes: a TatABC complex, containing multiple copies of TatA, TatB and TatC subunits, and a separate TatA complex, containing only TatA subunits. Substrates initially bind to the TatABC complex, which probably triggers association of the separate TatA complex to form the active translocon.

The protein resides in the cell inner membrane. Functionally, part of the twin-arginine translocation (Tat) system that transports large folded proteins containing a characteristic twin-arginine motif in their signal peptide across membranes. TatA could form the protein-conducting channel of the Tat system. The sequence is that of Sec-independent protein translocase protein TatA from Methylorubrum populi (strain ATCC BAA-705 / NCIMB 13946 / BJ001) (Methylobacterium populi).